The chain runs to 246 residues: Probable transcriptional regulatory protein YebC (246 aa).

Residues 1 to 20 (MAGHSKWANTRHRKAAQDAK) are disordered.

This sequence belongs to the TACO1 family.

Its subcellular location is the cytoplasm. In Salmonella typhimurium (strain LT2 / SGSC1412 / ATCC 700720), this protein is Probable transcriptional regulatory protein YebC.